Reading from the N-terminus, the 399-residue chain is 1-deoxy-D-xylulose 5-phosphate reductoisomerase (399 aa).

The NADPH site is built by Thr13, Gly14, Ser15, Ile16, and Asn127. Lys128 provides a ligand contact to 1-deoxy-D-xylulose 5-phosphate. Glu129 serves as a coordination point for NADPH. Asp153 contributes to the Mn(2+) binding site. 4 residues coordinate 1-deoxy-D-xylulose 5-phosphate: Ser154, Glu155, Ser187, and His210. Position 155 (Glu155) interacts with Mn(2+). Residue Gly216 participates in NADPH binding. 1-deoxy-D-xylulose 5-phosphate-binding residues include Ser223, Asn228, Lys229, and Glu232. Glu232 is a binding site for Mn(2+).

The protein belongs to the DXR family. Requires Mg(2+) as cofactor. It depends on Mn(2+) as a cofactor.

The catalysed reaction is 2-C-methyl-D-erythritol 4-phosphate + NADP(+) = 1-deoxy-D-xylulose 5-phosphate + NADPH + H(+). Its pathway is isoprenoid biosynthesis; isopentenyl diphosphate biosynthesis via DXP pathway; isopentenyl diphosphate from 1-deoxy-D-xylulose 5-phosphate: step 1/6. In terms of biological role, catalyzes the NADPH-dependent rearrangement and reduction of 1-deoxy-D-xylulose-5-phosphate (DXP) to 2-C-methyl-D-erythritol 4-phosphate (MEP). The sequence is that of 1-deoxy-D-xylulose 5-phosphate reductoisomerase from Bordetella parapertussis (strain 12822 / ATCC BAA-587 / NCTC 13253).